A 196-amino-acid polypeptide reads, in one-letter code: Mitochondrial intermembrane space cysteine motif-containing protein MIX23 (196 aa).

The Cx14C motif signature appears at 99-114; the sequence is CEKEAAEMKNETDQQC. The short motif at 178–192 is the Cx13C motif element; the sequence is CEQNNDYLKEFTQFC.

This sequence belongs to the MIX23 family.

Its subcellular location is the mitochondrion intermembrane space. In terms of biological role, regulator of the mitochondrial protein import machinery that is localized in the mitochondrial intermembrane space (IMS) and facilitates the transport of proteins from the cytosol into the mitochondrial matrix. Not essential for mitochondrial protein import but induced and required when mitochondrial import is compromised. Stimulates or stabilizes the translocation into the mitochondria of proteins such as OXA1, ATP1 and COX12. The chain is Mitochondrial intermembrane space cysteine motif-containing protein MIX23 from Saccharomyces cerevisiae (strain ATCC 204508 / S288c) (Baker's yeast).